Reading from the N-terminus, the 187-residue chain is Large ribosomal subunit protein uL5 (187 aa).

This sequence belongs to the universal ribosomal protein uL5 family. In terms of assembly, part of the 50S ribosomal subunit; part of the 5S rRNA/L5/L18/L25 subcomplex. Contacts the 5S rRNA and the P site tRNA. Forms a bridge to the 30S subunit in the 70S ribosome.

Its function is as follows. This is one of the proteins that bind and probably mediate the attachment of the 5S RNA into the large ribosomal subunit, where it forms part of the central protuberance. In the 70S ribosome it contacts protein S13 of the 30S subunit (bridge B1b), connecting the 2 subunits; this bridge is implicated in subunit movement. Contacts the P site tRNA; the 5S rRNA and some of its associated proteins might help stabilize positioning of ribosome-bound tRNAs. The protein is Large ribosomal subunit protein uL5 of Ruegeria sp. (strain TM1040) (Silicibacter sp.).